Reading from the N-terminus, the 805-residue chain is Leucine--tRNA ligase (805 aa).

Positions 40 to 51 match the 'HIGH' region motif; the sequence is PYPSGSGLHVGH. Positions 576 to 580 match the 'KMSKS' region motif; sequence KMSKS. Residue Lys579 participates in ATP binding.

This sequence belongs to the class-I aminoacyl-tRNA synthetase family.

It localises to the cytoplasm. The catalysed reaction is tRNA(Leu) + L-leucine + ATP = L-leucyl-tRNA(Leu) + AMP + diphosphate. This is Leucine--tRNA ligase from Chlorobium chlorochromatii (strain CaD3).